The primary structure comprises 793 residues: Splicing factor 3A subunit 1 (793 aa).

Positions 1–42 (MPAGPVQAVPPPPPAATEPKQPTEEEASSKEDSTPSKPVVGI) are disordered. A Glycyl lysine isopeptide (Lys-Gly) (interchain with G-Cter in SUMO2) cross-link involves residue K20. Over residues 21 to 34 (QPTEEEASSKEDST) the composition is skewed to basic and acidic residues. Residues 52–94 (IVDKTASFVARNGPEFEARIRQNEINNPKFNFLNPNDPYHAYY) form an SURP motif 1 repeat. At K55 the chain carries N6-acetyllysine. A Glycyl lysine isopeptide (Lys-Gly) (interchain with G-Cter in SUMO2) cross-link involves residue K131. The stretch at 166–208 (VVKLTAQFVARNGRQFLTQLMQKEQRNYQFDFLRPQHSLFNYF) is one SURP motif 2 repeat. Positions 318–412 (GESEEVEMEV…PAPAPDEYLV (95 aa)) are disordered. A phosphoserine mark is found at S320, S329, and S359. 2 stretches are compositionally biased toward acidic residues: residues 320–334 (SEEV…EEDE) and 354–364 (DMDEGSDDEEE). The segment covering 368–384 (VPPPPETPMPPPLPPTP) has biased composition (pro residues). Positions 388–397 (IVRKDYDPKA) are enriched in basic and acidic residues. Residue S413 is modified to Phosphoserine. K424 participates in a covalent cross-link: Glycyl lysine isopeptide (Lys-Gly) (interchain with G-Cter in SUMO2). The residue at position 451 (S451) is a Phosphoserine. A Phosphotyrosine modification is found at Y456. The span at 488-502 (IGEEEIQKPEEKVTW) shows a compositional bias: basic and acidic residues. 3 disordered regions span residues 488-518 (IGEE…AAQA), 530-584 (HKAK…AMPP), and 666-685 (PMPP…SKKL). K499 participates in a covalent cross-link: Glycyl lysine isopeptide (Lys-Gly) (interchain with G-Cter in SUMO2). S508 is subject to Phosphoserine. Positions 509–518 (MARTQQAAQA) are enriched in polar residues. K542 participates in a covalent cross-link: Glycyl lysine isopeptide (Lys-Gly) (interchain with G-Cter in SUMO2). Polar residues predominate over residues 563–572 (ATNIPSSAPP). Residues 666–675 (PMPPVHPPPP) are compositionally biased toward pro residues. A required and sufficient for nuclear import region spans residues 680–702 (PASKKLKTEDSLMPEEEFLRRNK). K686 is covalently cross-linked (Glycyl lysine isopeptide (Lys-Gly) (interchain with G-Cter in SUMO2)). The 87-residue stretch at 707-793 (IKVQVPNMQD…ALKERGGRKK (87 aa)) folds into the Ubiquitin-like domain. Phosphotyrosine is present on Y759.

Component of the 17S U2 SnRNP complex, a ribonucleoprotein complex that contains small nuclear RNA (snRNA) U2 and a number of specific proteins. Part of the SF3A subcomplex of the 17S U2 SnRNP complex which is composed of three subunits; SF3A3/SAP61, SF3A2/SAP62 and SF3A1/SAP114. SF3A associates with the splicing factor SF3B and a 12S RNA unit to form the mature 17S U2 small nuclear ribonucleoprotein complex (17S U2 snRNP). SF3A1 functions as a scaffold that interacts directly with both SF3A2 and SF3A3. Identified in the spliceosome 'E' complex, a precursor of the spliceosome 'A' complex. Identified in the spliceosome 'A' and 'B' complexes. Identified in the spliceosome 'C' complex. Interacts with P2RX6; resulting in a reduction of the splicing activity.

It is found in the nucleus. The protein resides in the nucleus speckle. Functionally, component of the 17S U2 SnRNP complex of the spliceosome, a large ribonucleoprotein complex that removes introns from transcribed pre-mRNAs. The 17S U2 SnRNP complex (1) directly participates in early spliceosome assembly and (2) mediates recognition of the intron branch site during pre-mRNA splicing by promoting the selection of the pre-mRNA branch-site adenosine, the nucleophile for the first step of splicing. Within the 17S U2 SnRNP complex, SF3A1 is part of the SF3A subcomplex that contributes to the assembly of the 17S U2 snRNP, and the subsequent assembly of the pre-spliceosome 'E' complex and the pre-catalytic spliceosome 'A' complex. Involved in pre-mRNA splicing as a component of pre-catalytic spliceosome 'B' complexes. The chain is Splicing factor 3A subunit 1 (SF3A1) from Bos taurus (Bovine).